The primary structure comprises 392 residues: GTPase Obg (392 aa).

Residues 1–159 (MKFVDEATIL…RDLQLELMLL (159 aa)) form the Obg domain. Positions 127–148 (NTRFKSSVNRTPRQKTMGTPGD) are disordered. Positions 129–143 (RFKSSVNRTPRQKTM) are enriched in polar residues. Residues 160-333 (ADVGMLGMPN…LCWDVMTFII (174 aa)) form the OBG-type G domain. GTP is bound by residues 166–173 (GMPNAGKS), 191–195 (FTTLV), 213–216 (DIPG), 283–286 (NKID), and 314–316 (SAA). Mg(2+) contacts are provided by serine 173 and threonine 193. Positions 362–386 (EEAEAEAEDDEDWDDDWDEDDEEGV) are enriched in acidic residues. Residues 362 to 392 (EEAEAEAEDDEDWDDDWDEDDEEGVEFIYKR) form a disordered region.

The protein belongs to the TRAFAC class OBG-HflX-like GTPase superfamily. OBG GTPase family. As to quaternary structure, monomer. Mg(2+) is required as a cofactor.

It is found in the cytoplasm. Functionally, an essential GTPase which binds GTP, GDP and possibly (p)ppGpp with moderate affinity, with high nucleotide exchange rates and a fairly low GTP hydrolysis rate. Plays a role in control of the cell cycle, stress response, ribosome biogenesis and in those bacteria that undergo differentiation, in morphogenesis control. The protein is GTPase Obg of Klebsiella pneumoniae subsp. pneumoniae (strain ATCC 700721 / MGH 78578).